The following is a 406-amino-acid chain: Probable endo-xylogalacturonan hydrolase A (406 aa).

Residues 1-18 (MISLNSIFLLSLVGLSRA) form the signal peptide. Residues 20-49 (PSRSETSPDRTIKPRAACTPTAGGSSSTDD) form a disordered region. 6 PbH1 repeats span residues 183 to 213 (TSNAQFTSLTMDATSNSDNLPKNTDAFDIGA), 214 to 235 (STYVTISSVAITNDDDCVAFKP), 237 to 257 (ANYVTVENVSCTGSHGISVGS), 266 to 289 (VQNVYARNITMINSSKAAGIKTYP), 299 to 320 (VKNATFEDFIVDGCDYAFQIQS), and 368 to 390 (TCDVTISGFEVKAPSGDAKILCG). The Proton donor role is filled by D228. A glycan (N-linked (GlcNAc...) asparagine) is linked at N244. The active site involves H251. N273, N278, and N301 each carry an N-linked (GlcNAc...) asparagine glycan.

It belongs to the glycosyl hydrolase 28 family.

The protein localises to the secreted. Pectinolytic enzyme involved in the degradation of xylogalacturonan (xga), a galacturonan backbone heavily substituted with xylose, and which is one important component of the hairy regions of pectin. Activity requires a galacturonic acid backbone substituted with xylose. The sequence is that of Probable endo-xylogalacturonan hydrolase A (xghA) from Aspergillus oryzae (strain ATCC 42149 / RIB 40) (Yellow koji mold).